Reading from the N-terminus, the 141-residue chain is Nucleoside triphosphatase NudI (141 aa).

Residues 1 to 141 (MRQRTIVCPI…RLTFTQKGLL (141 aa)) enclose the Nudix hydrolase domain. The short motif at 38 to 59 (GGMEPGETMEEALRREIREELG) is the Nudix box element.

It belongs to the Nudix hydrolase family. NudI subfamily. As to quaternary structure, monomer. It depends on Mg(2+) as a cofactor.

The enzyme catalyses a ribonucleoside 5'-triphosphate + H2O = a ribonucleoside 5'-phosphate + diphosphate + H(+). It catalyses the reaction a 2'-deoxyribonucleoside 5'-triphosphate + H2O = a 2'-deoxyribonucleoside 5'-phosphate + diphosphate + H(+). It carries out the reaction dUTP + H2O = dUMP + diphosphate + H(+). The catalysed reaction is dTTP + H2O = dTMP + diphosphate + H(+). The enzyme catalyses dCTP + H2O = dCMP + diphosphate + H(+). Catalyzes the hydrolysis of nucleoside triphosphates, with a preference for pyrimidine deoxynucleoside triphosphates (dUTP, dTTP and dCTP). This chain is Nucleoside triphosphatase NudI, found in Enterobacter sp. (strain 638).